The primary structure comprises 540 residues: MATSGAASAELVIGWCIFGLLLLAILAFCWIYVRKYQSRRESEVVSTITAIFSLAIALITSALLPVDIFLVSYMKNQNGTFKDWANANVSRQIEDTVLYGYYTLYSVILFCVFFWIPFVYFYYEEKDDDDTSKCTQIKTALKYTLGFVVICALLLLVGAFVPLNVPNNKNSTEWEKVKSLFEELGSSHGLAALSFSISSLTLIGMLAAITYTAYGMSALPLNLIKGTRSAAYERLENTEDIEEVEQHIQTIKSKSKDGRPLPARDKRALKQFEERLRTLKKRERHLEFIENSWWTKFCGALRPLKIVWGIFFILVALLFVISLFLSNLDKALHSAGIDSGFIIFGANLSNPLNMLLPLLQTVFPLDYILITIIIMYFIFTSMAGIRNIGIWFFWIRLYKIRRGRTRPQALLFLCMILLLIVLHTSYMIYSLAPQYVMYGSQNYLIETNITSDNHKGNSTLSVPKRCDADAPEDQCTVTRTYLFLHKFWFFSAAYYFGNWAFLGVFLIGLIVSCCKGKKSVIEGVDEDSDISDDEPSVYSA.

Topologically, residues 1–10 (MATSGAASAE) are extracellular. The chain crosses the membrane as a helical span at residues 11-31 (LVIGWCIFGLLLLAILAFCWI). The Cytoplasmic portion of the chain corresponds to 32-50 (YVRKYQSRRESEVVSTITA). Residues 51 to 71 (IFSLAIALITSALLPVDIFLV) traverse the membrane as a helical segment. Topologically, residues 72 to 100 (SYMKNQNGTFKDWANANVSRQIEDTVLYG) are extracellular. 2 N-linked (GlcNAc...) asparagine glycosylation sites follow: Asn-78 and Asn-88. A helical membrane pass occupies residues 101–121 (YYTLYSVILFCVFFWIPFVYF). Residues 122 to 144 (YYEEKDDDDTSKCTQIKTALKYT) lie on the Cytoplasmic side of the membrane. The helical transmembrane segment at 145–165 (LGFVVICALLLLVGAFVPLNV) threads the bilayer. Over 166–188 (PNNKNSTEWEKVKSLFEELGSSH) the chain is Extracellular. A glycan (N-linked (GlcNAc...) asparagine) is linked at Asn-170. A helical membrane pass occupies residues 189-209 (GLAALSFSISSLTLIGMLAAI). Over 210–305 (TYTAYGMSAL…KFCGALRPLK (96 aa)) the chain is Cytoplasmic. Residues 232-235 (YERL) carry the YERL motif; mediates interaction with adapter protein complex 2 and is essential for its function in clathrin-mediated endocytosis of INSR motif. Phosphothreonine is present on Thr-238. Residues 294-297 (WTKF) carry the WTKF motif; mediates interaction with adapter protein complex 2 and is essential for its function in clathrin-mediated endocytosis of INSR motif. Residues 306-326 (IVWGIFFILVALLFVISLFLS) form a helical membrane-spanning segment. At 327 to 364 (NLDKALHSAGIDSGFIIFGANLSNPLNMLLPLLQTVFP) the chain is on the extracellular side. Asn-347 carries N-linked (GlcNAc...) asparagine glycosylation. Residues 365–385 (LDYILITIIIMYFIFTSMAGI) form a helical membrane-spanning segment. Topologically, residues 386-408 (RNIGIWFFWIRLYKIRRGRTRPQ) are cytoplasmic. The helical transmembrane segment at 409–429 (ALLFLCMILLLIVLHTSYMIY) threads the bilayer. The Extracellular portion of the chain corresponds to 430–486 (SLAPQYVMYGSQNYLIETNITSDNHKGNSTLSVPKRCDADAPEDQCTVTRTYLFLHK). N-linked (GlcNAc...) asparagine glycans are attached at residues Asn-448 and Asn-457. The chain crosses the membrane as a helical span at residues 487–507 (FWFFSAAYYFGNWAFLGVFLI). Residues 508 to 540 (GLIVSCCKGKKSVIEGVDEDSDISDDEPSVYSA) lie on the Cytoplasmic side of the membrane. A phosphoserine mark is found at Ser-528 and Ser-531.

It belongs to the LIMR family. LMBRD1 subfamily. In terms of assembly, (Microbial infection) Interacts with hepatitis delta virus NES (HDAg-L). Interacts with ABCD4; this interaction induces the translocation of ABCD4 from the endoplasmic reticulum to the lysosome. Interacts with ABCD4 and MMACHC; this interaction ensures the transport of cobalamin from the lysosome to the cytoplasm. Interacts with INSR, adapter protein complex 2 and clathrin heavy chain. N-glycosylated. Isoform 3 is expressed in liver.

The protein resides in the endoplasmic reticulum membrane. It localises to the lysosome membrane. It is found in the cell membrane. The protein localises to the cytoplasmic vesicle. Its subcellular location is the clathrin-coated vesicle. Its function is as follows. Lysosomal membrane chaperone required to export cobalamin (vitamin B12) from the lysosome to the cytosol, allowing its conversion to cofactors. Targets ABCD4 transporter from the endoplasmic reticulum to the lysosome. Then forms a complex with lysosomal ABCD4 and cytoplasmic MMACHC to transport cobalamin across the lysosomal membrane. Acts as an adapter protein which plays an important role in mediating and regulating the internalization of the insulin receptor (INSR). Involved in clathrin-mediated endocytosis of INSR via its interaction with adapter protein complex 2. Essential for the initiation of gastrulation and early formation of mesoderm structures during embryogenesis. In terms of biological role, (Microbial infection) May play a role in the assembly of hepatitis delta virus (HDV). The protein is Lysosomal cobalamin transport escort protein LMBD1 of Homo sapiens (Human).